Reading from the N-terminus, the 595-residue chain is Trafficking protein particle complex subunit 14 (595 aa).

2 disordered regions span residues 84–111 (ASVS…ECVE) and 494–513 (SNPP…SSPA).

Component of the multisubunit TRAPP II complex, which includes at least TRAPPC1, TRAPPC2, TRAPPC2L, TRAPPC3, TRAPPC4, TRAPPC5, TRAPPC6A/B, TRAPPC9, TRAPPC10 and TRAPPC14. TRAPPC9, TRAPPC10 and TRAPPC14 are specific subunits of the TRAPP II complex. Interacts with alpha-tubulin during mitosis.

Its subcellular location is the cytoplasm. It is found in the cytoskeleton. It localises to the spindle. The protein localises to the vesicle. The protein resides in the midbody. Specific subunit of the TRAPP (transport protein particle) II complex, a highly conserved vesicle tethering complex that functions in late Golgi trafficking as a membrane tether. TRAPP II complex also has GEF activity toward RAB1A. TRAPPC14 is required for ciliogenesis. The chain is Trafficking protein particle complex subunit 14 (trappc14) from Danio rerio (Zebrafish).